Reading from the N-terminus, the 99-residue chain is Small integral membrane protein 14 (99 aa).

The Lumenal segment spans residues 1–49 (MAEGGFDPCECVCSHEHAMRRLINLLRQSQSYCTDTECLRELPGPSSDS). Residues 50-70 (GISITVILMAWMVIAMLLFLL) traverse the membrane as a helical segment. Residues 71–99 (RPPNLRGSSLPGKPSSPHSGQDPPAPPVD) are Cytoplasmic-facing. Residues 77–99 (GSSLPGKPSSPHSGQDPPAPPVD) are disordered.

As to expression, ubiquitously expressed.

The protein resides in the endoplasmic reticulum membrane. The sequence is that of Small integral membrane protein 14 (Smim14) from Mus musculus (Mouse).